A 386-amino-acid polypeptide reads, in one-letter code: Probable mannan endo-1,4-beta-mannosidase A (386 aa).

Residues 1–21 form the signal peptide; that stretch reads MKLNPSLLTAAGLVSAQLASA. Substrate contacts are provided by W95 and N207. E208 serves as the catalytic Proton donor. Y283 is a binding site for substrate. The active-site Nucleophile is E316. The N-linked (GlcNAc...) asparagine glycan is linked to N336. W346 provides a ligand contact to substrate.

It belongs to the glycosyl hydrolase 5 (cellulase A) family.

The protein resides in the secreted. It catalyses the reaction Random hydrolysis of (1-&gt;4)-beta-D-mannosidic linkages in mannans, galactomannans and glucomannans.. Its function is as follows. Endo-1,4-mannanase, a crucial enzyme for depolymerization of seed galactomannans and wood galactoglucomannans. The sequence is that of Probable mannan endo-1,4-beta-mannosidase A (manA) from Aspergillus oryzae (strain ATCC 42149 / RIB 40) (Yellow koji mold).